A 322-amino-acid chain; its full sequence is Outer membrane protein assembly factor BamC (322 aa).

An N-terminal signal peptide occupies residues 1 to 22 (MISLLAVAVLAGCSNPETRSQA).

It belongs to the BamC family. As to quaternary structure, part of the Bam complex.

The protein resides in the cell outer membrane. In terms of biological role, part of the outer membrane protein assembly complex, which is involved in assembly and insertion of beta-barrel proteins into the outer membrane. The protein is Outer membrane protein assembly factor BamC of Oceanimonas sp. (strain GK1 / IBRC-M 10197).